The primary structure comprises 544 residues: Methionine--tRNA ligase (544 aa).

The 'HIGH' region motif lies at 10-20 (PYANGSLHLGH). C141, C144, C153, and C156 together coordinate Zn(2+). The short motif at 329–333 (KLSTS) is the 'KMSKS' region element. Residue T332 coordinates ATP.

It belongs to the class-I aminoacyl-tRNA synthetase family. MetG type 1 subfamily. In terms of assembly, monomer. Zn(2+) is required as a cofactor.

The protein resides in the cytoplasm. It catalyses the reaction tRNA(Met) + L-methionine + ATP = L-methionyl-tRNA(Met) + AMP + diphosphate. Its function is as follows. Is required not only for elongation of protein synthesis but also for the initiation of all mRNA translation through initiator tRNA(fMet) aminoacylation. The sequence is that of Methionine--tRNA ligase from Bacillus cereus (strain Q1).